We begin with the raw amino-acid sequence, 422 residues long: Autophagy-related protein 21 (422 aa).

6 WD repeats span residues 1–35, 102–153, 166–206, 228–268, 280–319, and 374–414; these read MGLS…KCFE, SFPH…ITGQ, MTSL…SKSV, VHKG…ESEL, NRPC…RLLS, and KNTK…GSCV. The L/FRRG motif signature appears at 276 to 280; that stretch reads FRRGN.

The protein belongs to the WD repeat PROPPIN family.

Its subcellular location is the cytoplasm. It is found in the membrane. The protein resides in the vacuole membrane. Its function is as follows. Required for cytoplasm to vacuole transport (Cvt) vesicles formation and mitophagy. Involved in binding of phosphatidylethanolamine to ATG8 and in recruitment of ATG8 and ATG5 to the pre-autophagosomal structure. Protects ATG8 from ARG4-mediated cleavage. The chain is Autophagy-related protein 21 (ATG21) from Vanderwaltozyma polyspora (strain ATCC 22028 / DSM 70294 / BCRC 21397 / CBS 2163 / NBRC 10782 / NRRL Y-8283 / UCD 57-17) (Kluyveromyces polysporus).